Consider the following 325-residue polypeptide: UPF0285 protein MmarC6_0247 (325 aa).

The protein belongs to the UPF0285 family.

The sequence is that of UPF0285 protein MmarC6_0247 from Methanococcus maripaludis (strain C6 / ATCC BAA-1332).